Reading from the N-terminus, the 530-residue chain is Synembryn-like chaperone C3E7.04c (530 aa).

Residues 492-512 (SFIYHCYHSFVGPIHILLLMF) traverse the membrane as a helical segment.

It belongs to the synembryn family.

It is found in the membrane. Its function is as follows. Chaperone that specifically binds and folds some, but not all, nascent G alpha proteins prior to G protein heterotrimer formation, promoting their stability and activity. Also acts as a guanine nucleotide exchange factor (GEF) for G alpha proteins by stimulating exchange of bound GDP for free GTP. This chain is Synembryn-like chaperone C3E7.04c, found in Schizosaccharomyces pombe (strain 972 / ATCC 24843) (Fission yeast).